A 428-amino-acid chain; its full sequence is Probable oxidoreductase OrdL (428 aa).

The protein is Probable oxidoreductase OrdL (ordL) of Rhizobium meliloti (strain 1021) (Ensifer meliloti).